Consider the following 150-residue polypeptide: Siroheme decarboxylase NirD subunit (150 aa).

This sequence belongs to the Ahb/Nir family. Probably forms a complex composed of NirD, NirL, NirG and NirH. All proteins are required for the total conversion of siroheme to didecarboxysiroheme.

It carries out the reaction siroheme + 2 H(+) = 12,18-didecarboxysiroheme + 2 CO2. It participates in porphyrin-containing compound metabolism. Functionally, involved in heme d1 biosynthesis. Catalyzes the decarboxylation of siroheme into didecarboxysiroheme. The protein is Siroheme decarboxylase NirD subunit of Pseudomonas aeruginosa (strain ATCC 15692 / DSM 22644 / CIP 104116 / JCM 14847 / LMG 12228 / 1C / PRS 101 / PAO1).